The chain runs to 155 residues: Interleukin-2 (155 aa).

The signal sequence occupies residues 1-20; sequence MYKIQLLSCIALTLALVANG. An O-linked (GalNAc...) threonine glycan is attached at Thr-23. A disulfide bond links Cys-79 and Cys-127.

The protein belongs to the IL-2 family.

Its subcellular location is the secreted. Cytokine produced by activated CD4-positive helper T-cells and to a lesser extend activated CD8-positive T-cells and natural killer (NK) cells that plays pivotal roles in the immune response and tolerance. Binds to a receptor complex composed of either the high-affinity trimeric IL-2R (IL2RA/CD25, IL2RB/CD122 and IL2RG/CD132) or the low-affinity dimeric IL-2R (IL2RB and IL2RG). Interaction with the receptor leads to oligomerization and conformation changes in the IL-2R subunits resulting in downstream signaling starting with phosphorylation of JAK1 and JAK3. In turn, JAK1 and JAK3 phosphorylate the receptor to form a docking site leading to the phosphorylation of several substrates including STAT5. This process leads to activation of several pathways including STAT, phosphoinositide-3-kinase/PI3K and mitogen-activated protein kinase/MAPK pathways. Functions as a T-cell growth factor and can increase NK-cell cytolytic activity as well. Promotes strong proliferation of activated B-cells and subsequently immunoglobulin production. Plays a pivotal role in regulating the adaptive immune system by controlling the survival and proliferation of regulatory T-cells, which are required for the maintenance of immune tolerance. Moreover, participates in the differentiation and homeostasis of effector T-cell subsets, including Th1, Th2, Th17 as well as memory CD8-positive T-cells. This Moschus berezovskii (Chinese forest musk deer) protein is Interleukin-2 (IL2).